Reading from the N-terminus, the 286-residue chain is Protein HEXIM2 (286 aa).

Residues 1 to 11 (MMATPNQTACN) are compositionally biased toward polar residues. Residues 1–195 (MMATPNQTAC…GEFQRKDFSE (195 aa)) form a disordered region. S29 is modified (phosphoserine). Residue T32 is modified to Phosphothreonine. At S39 the chain carries Phosphoserine. Phosphothreonine is present on T46. 5 positions are modified to phosphoserine: S51, S53, S71, S76, and S81. Over residues 68–78 (NSRSPRTQSPG) the composition is skewed to polar residues. Basic residues predominate over residues 87-103 (ARKKHRRRPSKRKRHWR). The span at 113–132 (KQQRDERQSQRASRVREEMF) shows a compositional bias: basic and acidic residues. Residues 140–143 (PYNT) form an interaction with P-TEFb region. The segment covering 178–195 (SDGRGRAHGEFQRKDFSE) has biased composition (basic and acidic residues). Residues 207-277 (GRSKQELVRD…QENQMWNREG (71 aa)) adopt a coiled-coil conformation. The tract at residues 226-286 (QAEEETRRLQ…GCRCDEEPGT (61 aa)) is interaction with CCNT1, HEXIM1 and HEXIM2.

The protein belongs to the HEXIM family. Homooligomer and heterooligomer with HEXIM1; probably dimeric. Core component of the 7SK RNP complex, at least composed of 7SK RNA, LARP7, MEPCE, HEXIM1 (or HEXIM2) and P-TEFb (composed of CDK9 and CCNT1/cyclin-T1). Interacts with CCNT2. As to expression, ubiquitously expressed with higher expression in testis. HEXIM1 and HEXIM2 are differentially expressed.

The protein localises to the nucleus. Transcriptional regulator which functions as a general RNA polymerase II transcription inhibitor. Core component of the 7SK RNP complex: in cooperation with 7SK snRNA sequesters P-TEFb in a large inactive 7SK snRNP complex preventing RNA polymerase II phosphorylation and subsequent transcriptional elongation. The sequence is that of Protein HEXIM2 (HEXIM2) from Homo sapiens (Human).